A 94-amino-acid polypeptide reads, in one-letter code: Small ribosomal subunit protein uS17 (94 aa).

The protein belongs to the universal ribosomal protein uS17 family. As to quaternary structure, part of the 30S ribosomal subunit.

One of the primary rRNA binding proteins, it binds specifically to the 5'-end of 16S ribosomal RNA. The polypeptide is Small ribosomal subunit protein uS17 (Deinococcus geothermalis (strain DSM 11300 / CIP 105573 / AG-3a)).